A 255-amino-acid polypeptide reads, in one-letter code: Indole-3-glycerol phosphate synthase (255 aa).

The protein belongs to the TrpC family.

It carries out the reaction 1-(2-carboxyphenylamino)-1-deoxy-D-ribulose 5-phosphate + H(+) = (1S,2R)-1-C-(indol-3-yl)glycerol 3-phosphate + CO2 + H2O. It functions in the pathway amino-acid biosynthesis; L-tryptophan biosynthesis; L-tryptophan from chorismate: step 4/5. The polypeptide is Indole-3-glycerol phosphate synthase (Streptococcus pneumoniae serotype 19F (strain G54)).